The sequence spans 484 residues: AMP nucleosidase (484 aa).

This sequence belongs to the AMP nucleosidase family.

The enzyme catalyses AMP + H2O = adenine + D-ribose 5-phosphate. In terms of biological role, catalyzes the hydrolysis of the N-glycosidic bond of AMP to form adenine and ribose 5-phosphate. Involved in regulation of AMP concentrations. The chain is AMP nucleosidase from Escherichia coli O157:H7.